The primary structure comprises 141 residues: Nucleoside diphosphate kinase (141 aa).

Positions 11, 59, 87, 93, 104, and 114 each coordinate ATP. His117 (pros-phosphohistidine intermediate) is an active-site residue.

This sequence belongs to the NDK family. As to quaternary structure, homotetramer. The cofactor is Mg(2+).

It localises to the cytoplasm. The catalysed reaction is a 2'-deoxyribonucleoside 5'-diphosphate + ATP = a 2'-deoxyribonucleoside 5'-triphosphate + ADP. It catalyses the reaction a ribonucleoside 5'-diphosphate + ATP = a ribonucleoside 5'-triphosphate + ADP. Its function is as follows. Major role in the synthesis of nucleoside triphosphates other than ATP. The ATP gamma phosphate is transferred to the NDP beta phosphate via a ping-pong mechanism, using a phosphorylated active-site intermediate. This Histophilus somni (strain 2336) (Haemophilus somnus) protein is Nucleoside diphosphate kinase.